Here is a 718-residue protein sequence, read N- to C-terminus: ADP-ribosylation factor-binding protein GGA3 (718 aa).

The region spanning 16–146 (ATNPSNRQED…MLKRQGIVQS (131 aa)) is the VHS domain. A phosphoserine mark is found at Ser159 and Ser275. A GAT domain is found at 171–298 (DEEKSKLLAR…VINSYKTIIE (128 aa)). The interval 299 to 588 (GQIVNGEVTT…VHVPLESIKP (290 aa)) is unstructured hinge. 2 stretches are compositionally biased toward low complexity: residues 334 to 350 (APSNSSPALAPPTSGIP) and 360 to 369 (GPPRSRSSSQ). A disordered region spans residues 334 to 381 (APSNSSPALAPPTSGIPILPPPPQTSGPPRSRSSSQAEAPPGSDSTNN). Residues 387–391 (DEELL) carry the Autoinhibitory motif. Disordered stretches follow at residues 395–455 (LTDP…MSQA) and 477–506 (SFMFSSGPAPALAPKAEPKGPEYPSSSTSH). In terms of domain architecture, GAE spans 589–710 (SSALPVTAYD…TELGEVDQFP (122 aa)).

The protein belongs to the GGA protein family. In terms of assembly, monomer. Interacts with GGA1 and GGA2. Binds to clathrin and activated ARFs, such as ARF1, ARF5 and ARF6. Binds RABEP1 and RABGEF1. Interacts with the membrane proteins M6PR/CD-MPR and IGF2R/CI-MPR and the accessory proteins SYNRG, EPN4, NECAP1, NECAP2 and AFTPH/aftiphilin. Interacts with TSG101 and UBC. Interacts with ADRA2B. Interacts with NTRK1; the interaction is independent of NTRK1 activation and ubiquitination. Interacts (via VHS domain) with BACE1 (via DXXLL motif). In terms of processing, phosphorylated by CK2 and dephosphorylated by PP2A. Phosphorylation of GGA3 allows the internal DXXLL motif to bind the VHS domain and to inhibit the recognition of cargo signals. Post-translationally, ubiquitinated. Proteolytically cleaved during apoptosis by CASP3.

The protein resides in the golgi apparatus. The protein localises to the trans-Golgi network membrane. It is found in the endosome membrane. It localises to the early endosome membrane. Its subcellular location is the recycling endosome membrane. Its function is as follows. Plays a role in protein sorting and trafficking between the trans-Golgi network (TGN) and endosomes. Mediates the ARF-dependent recruitment of clathrin to the TGN and binds ubiquitinated proteins and membrane cargo molecules with a cytosolic acidic cluster-dileucine (DXXLL) motif. In terms of biological role, plays a role in protein sorting and trafficking between the trans-Golgi network (TGN) and endosomes. Mediates the ARF-dependent recruitment of clathrin to the TGN and binds ubiquitinated proteins and membrane cargo molecules with a cytosolic acidic cluster-dileucine (DXXLL) motif. Mediates export of the GPCR receptor ADRA2B to the cell surface. Involved in BACE1 transport and sorting as well as regulation of BACE1 protein levels. Regulates retrograde transport of BACE1 from endosomes to the trans-Golgi network via interaction through the VHS motif and dependent of BACE1 phosphorylation. Modulates BACE1 protein levels independently of the interaction between VHS domain and DXXLL motif through recognition of ubiquitination. Key player in a novel DXXLL-mediated endosomal sorting machinery to the recycling pathway that targets NTRK1 to the plasma membrane. The chain is ADP-ribosylation factor-binding protein GGA3 (Gga3) from Mus musculus (Mouse).